We begin with the raw amino-acid sequence, 178 residues long: MEVASSSSACQFDNLNNNNNELKPVRPKRDFRFKVIEVQNGPKWFVWPSRNRGSSEDVDENDNKKVSQPQNNGFGALRRSVIRQSKRKQDQDAIAARTASEPASARRLSAKKEKAVTEPLNQVSSMFKIISIEKNWESFDATDNEDNDEDLEDGARTVSVISLTSVIEGGERRWTTSI.

Residues 1–13 (MEVASSSSACQFD) are compositionally biased toward polar residues. Disordered regions lie at residues 1-24 (MEVA…ELKP) and 47-114 (WPSR…KKEK).

This is an uncharacterized protein from Caenorhabditis elegans.